The sequence spans 187 residues: Ribonuclease HII (187 aa).

The RNase H type-2 domain occupies 1–187 (MIILGIDEAG…YKPVQVLLNE (187 aa)). A divalent metal cation contacts are provided by Asp-7, Glu-8, and Asp-99.

Belongs to the RNase HII family. It depends on Mn(2+) as a cofactor. Mg(2+) serves as cofactor.

Its subcellular location is the cytoplasm. The enzyme catalyses Endonucleolytic cleavage to 5'-phosphomonoester.. Endonuclease that specifically degrades the RNA of RNA-DNA hybrids. This Francisella tularensis subsp. tularensis (strain FSC 198) protein is Ribonuclease HII.